A 200-amino-acid polypeptide reads, in one-letter code: Ribosome maturation factor RimM (200 aa).

A PRC barrel domain is found at 103-181 (KEGEYYFYQL…KIVAKRLEYL (79 aa)).

The protein belongs to the RimM family. In terms of assembly, binds ribosomal protein uS19.

It is found in the cytoplasm. Functionally, an accessory protein needed during the final step in the assembly of 30S ribosomal subunit, possibly for assembly of the head region. Essential for efficient processing of 16S rRNA. May be needed both before and after RbfA during the maturation of 16S rRNA. It has affinity for free ribosomal 30S subunits but not for 70S ribosomes. In Kosmotoga olearia (strain ATCC BAA-1733 / DSM 21960 / TBF 19.5.1), this protein is Ribosome maturation factor RimM.